The chain runs to 513 residues: MGNHLSVNKLKRKKKKKSFLNIYGKNTNENTSKQSNDYKYDINTSCISREGTTTLERKNLILCHSGKLEDKYIIDEKLGQGTYGCVYKGIDKVTNQLYAIKEEKKDRLKNINRFFQEIEIMKKLDHPNIVKLYETYENDNYIYLIMELCSGRELFDSIIENGSFTEKNAATIMKQIFSAIFYLHSLNIVHRDLKPENFLFQSENKDSLLKIIDFGLSKNLGTGEFTTTKAGTPYYVAPQVLDGKYDKKCDIWSSGVIMYTLLCGYPPFYGDTDNEVLKKVKKGEFCFYENDWGSISSDAKNLITKLLTYNPNERCTIEEALNHPWITQMTKSHEHVELSSTLLKNLKNFKKENELKKIALTIIAKHLCDVEINNLRNIFIALDVDNSGTLSSQEILDGLKKIGYQKIPPDIHQVLRDIDSNASGQIHYTDFLAATIDKQTYLKKEVCLIPFKFFDIDGNGKISVEELKRIFGRDDIENPLIDKAIDSLLQEVDLNGDGEIDFHEFMLMMSKKK.

Gly-2 is lipidated: N-myristoyl glycine. The Protein kinase domain maps to 72 to 326; that stretch reads YIIDEKLGQG…IEEALNHPWI (255 aa). ATP is bound by residues 78–86 and Lys-101; that span reads LGQGTYGCV. The active-site Proton acceptor is Asp-192. Residues 345 to 353 carry the J domain autoinhibitory motif motif; it reads NLKNFKKEN. The segment at 345–380 is j domain; it reads NLKNFKKENELKKIALTIIAKHLCDVEINNLRNIFI. The short motif at 354–363 is the J domain EF-hand interaction motif element; that stretch reads ELKKIALTII. 4 consecutive EF-hand domains span residues 370–405, 406–441, 442–477, and 480–513; these read VEINNLRNIFIALDVDNSGTLSSQEILDGLKKIGYQ, KIPPDIHQVLRDIDSNASGQIHYTDFLAATIDKQTY, LKKEVCLIPFKFFDIDGNGKISVEELKRIFGRDDIE, and LIDKAIDSLLQEVDLNGDGEIDFHEFMLMMSKKK. Ca(2+)-binding residues include Asp-383, Asp-385, Ser-387, Thr-389, and Glu-394. The Ca(2+) site is built by Asp-455, Asp-457, Asn-459, Lys-461, Glu-466, Asp-493, Asn-495, Asp-497, Glu-499, and Glu-504.

Belongs to the protein kinase superfamily. Ser/Thr protein kinase family. CDPK subfamily. In terms of assembly, monomer. The cofactor is Mg(2+). In terms of processing, myristoylated; myristoylation may target it to different subcellular compartments. Autophosphorylated in vitro.

The catalysed reaction is L-seryl-[protein] + ATP = O-phospho-L-seryl-[protein] + ADP + H(+). It carries out the reaction L-threonyl-[protein] + ATP = O-phospho-L-threonyl-[protein] + ADP + H(+). Activated by calcium. Upon calcium binding to the EF-hand domains, the C-terminus of the junction domain (J domain) undergoes a conformational change which results in the dissociation of the pseudo-substrate inhibitory motif from the catalytic domain. This, in turn, may facilitate the autophosphorylation of the activation loop at Thr-232, which leads to the kinase activation. Calcium-dependent protein kinase which acts as a sensor and effector of intracellular Ca(2+) levels probably in part downstream of cGMP-activated PKG kinase. During male gametogenesis in the mosquito gut, required for male exflagellation, possibly by regulating male gamete exit from the host erythrocytes. Not required for asexual blood stage proliferation. The sequence is that of Calcium-dependent protein kinase 2 from Plasmodium falciparum (isolate K1 / Thailand).